The following is a 656-amino-acid chain: Protein sly1 homolog (656 aa).

4 repeat units span residues 85–121 (DENL…NLAA), 203–245 (RNSA…FSFQ), 419–456 (LELL…ERLR), and 460–496 (QSAG…GGGT). A 4 X approximate repeats region spans residues 85–496 (DENLDRIQQD…QATQYEGGGT (412 aa)).

This sequence belongs to the STXBP/unc-18/SEC1 family.

The protein resides in the cytoplasm. Its subcellular location is the membrane. Non-vital for development. In Drosophila virilis (Fruit fly), this protein is Protein sly1 homolog (Slh).